The sequence spans 143 residues: Putative protein FPV235 (143 aa).

In Vertebrata (FPV), this protein is Putative protein FPV235.